Consider the following 338-residue polypeptide: Lipoate-protein ligase A (338 aa).

The BPL/LPL catalytic domain occupies 29-216 (PATQRVLFLW…AFFAHYGERV (188 aa)). ATP contacts are provided by residues Arg-71, 76–79 (GAVF), and Lys-134. Lys-134 is a binding site for (R)-lipoate.

Belongs to the LplA family. In terms of assembly, monomer.

The protein resides in the cytoplasm. It catalyses the reaction L-lysyl-[lipoyl-carrier protein] + (R)-lipoate + ATP = N(6)-[(R)-lipoyl]-L-lysyl-[lipoyl-carrier protein] + AMP + diphosphate + H(+). It participates in protein modification; protein lipoylation via exogenous pathway; protein N(6)-(lipoyl)lysine from lipoate: step 1/2. Its pathway is protein modification; protein lipoylation via exogenous pathway; protein N(6)-(lipoyl)lysine from lipoate: step 2/2. Functionally, catalyzes both the ATP-dependent activation of exogenously supplied lipoate to lipoyl-AMP and the transfer of the activated lipoyl onto the lipoyl domains of lipoate-dependent enzymes. The polypeptide is Lipoate-protein ligase A (Escherichia coli O1:K1 / APEC).